The chain runs to 399 residues: Guanine nucleotide-binding protein negative regulator 1 (399 aa).

WD repeat units lie at residues 44 to 83 (KPLNFFHSSRWSPDGSTILSLTEDQCLNCWNVPFSDLSKK), 105 to 145 (YSYS…NKAS), 150 to 194 (DHQE…VMTT), 207 to 247 (SLKG…PCQL), 252 to 292 (ERGN…DMVY), and 296 to 337 (GHRG…EETH).

Interacts with gpa1.

It localises to the cytoplasm. In terms of biological role, negatively regulates the pheromone-response pathway. Acts as a structural mimic of the G protein beta subunit thereby interacting with gpa1 which then inhibits gpa1 signaling. The polypeptide is Guanine nucleotide-binding protein negative regulator 1 (gnr1) (Schizosaccharomyces pombe (strain 972 / ATCC 24843) (Fission yeast)).